Here is a 901-residue protein sequence, read N- to C-terminus: MLIPSKLSRPVRLDHTVVRERLLAKLSGANNFRLALVTSPAGYGKTTLVSQWAAGKNELGWYSLDEGDNQQERFASYLIAAIQQATGGHCSTSEAMAQKRQYASLTSLFAQLFIELAQWHRPLYLVIDDYHLITNPVIHDAMRFFLRHQPENFTLVVLSRNLPQLGIANLRVRDQLLEIGSQQLAFNHQEAKQFFDRRLSSPIEASESSRMCDDVAGWATALQLIALSARQNHTSAHHSARRLAGINASHLSDYLVDEVLDNVDVSTRHFLLKSAILRSMNDALIVRVTGEENGQMRLEEIERQGLFLQRMDDTGEWFSYHPLFGSFLRQRCQWELAAELPEIHRAAAESWMEQGFPSEAIHHALAAGDAQMLRDILLNHAWGLFNHSELALLEESLKALPWESLLENPRLVLLQAWLMQSQHRYSEVNTLLARAEQEIKGVMDGTLHAEFNALRAQVAINDGNPEEAERLAKLALDELPLAWFYSRIVATSVHGEVLHCKGDLSQSLSLMQQTEQMARHHDVWHYALWSLIQQSEIQFAQGFLQAAWETQERAFQLIKEQHLEQLPMHEFLVRIRAQLLWAWARLDEAEASARSGIAVLSTFQPQQQLQCLTLLVQCSLARGDLDNARSQLNRLENLLGNGRYHCDWISNADKVRVIYWQLTGDKKSAANWLRHTPKPAFANNHFLQGQWRNIARAQILLGEFEPAEIVLEELNENARSLRLMSDLNRNLLLLNQLYWQSGRKNDAQRVLLDALQLANRTGFISHFVIEGEAMAQQLRQLIQLNTLPEMEQHRAQRILREINQHHRHKFAHFDEGFVERLLNHPDVPELIRTSPLTQREWQVLGLIYSGYSNEQIAGELAVAATTIKTHIRNLYQKLGVAHRQDAVQHAQQLLKMMGYGV.

39–46 contributes to the ATP binding site; that stretch reads SPAGYGKT. Residues 829-894 form the HTH luxR-type domain; the sequence is ELIRTSPLTQ…DAVQHAQQLL (66 aa). A DNA-binding region (H-T-H motif) is located at residues 853–872; that stretch reads NEQIAGELAVAATTIKTHIR.

The protein belongs to the MalT family. Monomer in solution. Oligomerizes to an active state in the presence of the positive effectors ATP and maltotriose.

Activated by ATP and maltotriose, which are both required for DNA binding. Its function is as follows. Positively regulates the transcription of the maltose regulon whose gene products are responsible for uptake and catabolism of malto-oligosaccharides. Specifically binds to the promoter region of its target genes, recognizing a short DNA motif called the MalT box. The chain is HTH-type transcriptional regulator MalT from Salmonella heidelberg (strain SL476).